Consider the following 340-residue polypeptide: DNA-directed RNA polymerase subunit alpha (340 aa).

Residues 1–238 (MADTFVAKNW…EQLTVFVNFD (238 aa)) are alpha N-terminal domain (alpha-NTD). Residues 253 to 340 (AKLNENLFRS…QAPAPAQPKA (88 aa)) are alpha C-terminal domain (alpha-CTD).

Belongs to the RNA polymerase alpha chain family. Homodimer. The RNAP catalytic core consists of 2 alpha, 1 beta, 1 beta' and 1 omega subunit. When a sigma factor is associated with the core the holoenzyme is formed, which can initiate transcription.

It catalyses the reaction RNA(n) + a ribonucleoside 5'-triphosphate = RNA(n+1) + diphosphate. Its function is as follows. DNA-dependent RNA polymerase catalyzes the transcription of DNA into RNA using the four ribonucleoside triphosphates as substrates. This Myxococcus xanthus (strain DK1622) protein is DNA-directed RNA polymerase subunit alpha.